Here is a 215-residue protein sequence, read N- to C-terminus: Ras-related protein SEC4 (215 aa).

27 to 34 (GDSGVGKS) serves as a coordination point for GTP. The Effector region motif lies at 49–57 (FITTIGIDF). Residues 75-79 (DTAGQ) and 133-136 (NKSD) each bind GTP. Phosphoserine is present on residues Ser-201 and Ser-204. 2 S-geranylgeranyl cysteine lipidation sites follow: Cys-214 and Cys-215.

The protein belongs to the small GTPase superfamily. Rab family. As to quaternary structure, interacts with the guanyl-nucleotide exchange factor SEC2. Interacts with SRO7, YIF1, YIP3, YIP4 and YIP5.

Its subcellular location is the cytoplasmic vesicle. The protein localises to the secretory vesicle membrane. It localises to the cell membrane. It is found in the cytoplasm. Its function is as follows. Involved in exocytosis. Maybe by regulating the binding and fusion of secretory vesicles with the cell surface. The GTP-bound form of SEC4 may interact with an effector, thereby stimulating its activity and leading to exocytotic fusion. SEC4 may be an upstream activator of the 19.5S SEC8/SEC15 particle. SEC4 probably interacts directly with SEC8; it could serve as the attachment site for the SEC8/SEC15 particle. The chain is Ras-related protein SEC4 (SEC4) from Saccharomyces cerevisiae (strain ATCC 204508 / S288c) (Baker's yeast).